A 433-amino-acid polypeptide reads, in one-letter code: Ribosome biogenesis protein WDR12 homolog (433 aa).

Positions 21-102 are ubiquitin-like (UBL) domain; sequence VEVFVVSYRH…ESVISIECIV (82 aa). 7 WD repeats span residues 114–151, 153–194, 203–242, 270–310, 312–351, 357–397, and 401–433; these read ALLD…LTSS, LHEE…SSTF, GHER…TSTV, GHKD…QINT, AAKK…GTLV, GHCG…TPLY, and GHSD…RRKM.

It belongs to the WD repeat WDR12/YTM1 family.

The protein resides in the nucleus. It localises to the nucleolus. Its subcellular location is the nucleoplasm. Functionally, required for maturation of ribosomal RNAs and formation of the large ribosomal subunit. In Brugia malayi (Filarial nematode worm), this protein is Ribosome biogenesis protein WDR12 homolog.